Consider the following 841-residue polypeptide: Outer membrane usher protein MyfC (841 aa).

A signal peptide spans 1 to 26 (MFFSLKNSVAKLIAFWAICLVLPVWA). Cysteines 817 and 840 form a disulfide.

This sequence belongs to the fimbrial export usher family.

The protein localises to the cell outer membrane. Functionally, involved in the export and assembly of the MyfA fimbrial subunit. The sequence is that of Outer membrane usher protein MyfC (myfC) from Yersinia enterocolitica.